Here is a 152-residue protein sequence, read N- to C-terminus: UPF0266 membrane protein Ent638_2389 (152 aa).

The next 3 helical transmembrane spans lie at 6 to 26, 45 to 65, and 67 to 87; these read IVLV…EFIM, VDAF…VMSQ, and ALLT…LFWI.

It belongs to the UPF0266 family.

It localises to the cell inner membrane. The polypeptide is UPF0266 membrane protein Ent638_2389 (Enterobacter sp. (strain 638)).